Consider the following 161-residue polypeptide: UPF0262 protein mll6455 (161 aa).

It belongs to the UPF0262 family.

The chain is UPF0262 protein mll6455 from Mesorhizobium japonicum (strain LMG 29417 / CECT 9101 / MAFF 303099) (Mesorhizobium loti (strain MAFF 303099)).